The following is a 189-amino-acid chain: Effector protein NleF (189 aa).

The segment at 186-189 (LQCG) is interaction with host caspases.

Monomer. Interacts (via C-terminus) with human CASP4, CASP8 and CASP9.

Its subcellular location is the secreted. The protein resides in the host cytoplasm. Effector protein that alters host cell physiology and promotes bacterial survival in host tissues. Inhibits the catalytic activity of human CASP4, CASP8 and CASP9, and thereby inhibits apoptosis of infected host cells. The chain is Effector protein NleF (nleF) from Escherichia coli O157:H7.